A 319-amino-acid polypeptide reads, in one-letter code: Probable arabinan endo-1,5-alpha-L-arabinosidase A (319 aa).

A signal peptide spans 1–19 (MYLQSSLALVLLRAAVVHG). Aspartate 34 serves as the catalytic Proton acceptor. The N-linked (GlcNAc...) asparagine glycan is linked to asparagine 53. Glutamate 198 acts as the Proton donor in catalysis.

The protein belongs to the glycosyl hydrolase 43 family.

It is found in the secreted. The catalysed reaction is Endohydrolysis of (1-&gt;5)-alpha-arabinofuranosidic linkages in (1-&gt;5)-arabinans.. Its pathway is glycan metabolism; L-arabinan degradation. Endo-1,5-alpha-L-arabinanase involved in degradation of pectin. Its preferred substrate is linear 1,5-alpha-L-arabinan. This Aspergillus flavus (strain ATCC 200026 / FGSC A1120 / IAM 13836 / NRRL 3357 / JCM 12722 / SRRC 167) protein is Probable arabinan endo-1,5-alpha-L-arabinosidase A (abnA).